Reading from the N-terminus, the 398-residue chain is Thyrotropin-releasing hormone receptor (398 aa).

Topologically, residues 1-28 (MENETGSELNQTQLQPRAVVALEYQVVT) are extracellular. N3 and N10 each carry an N-linked (GlcNAc...) asparagine glycan. A helical membrane pass occupies residues 29-51 (ILLVLIICGLGIVGNIMVVLVVM). The Cytoplasmic portion of the chain corresponds to 52 to 61 (RTKHMRTPTN). A helical membrane pass occupies residues 62–83 (CYLVSLAVADLMVLVAAGLPNI). Topologically, residues 84–99 (TDSIYGSWVYGYVGCL) are extracellular. C98 and C179 are joined by a disulfide. A helical transmembrane segment spans residues 100–121 (CITYLQYLGINASSCSITAFTI). Topologically, residues 122–144 (ERYIAICHPIKAQFLCTFSRAKK) are cytoplasmic. A helical transmembrane segment spans residues 145–168 (IIIFVWAFTSIYCMLWFFLLDLNI). At 169 to 193 (STYKDAIVVSCGYKISRNYYSPIYL) the chain is on the extracellular side. A helical membrane pass occupies residues 194–215 (MDFGVFYVVPMILATVLYGFIA). Residues 216–266 (RILFLSPIPSDPKENSNTWKNDSTHQNKNLNSKTSNRYFNSTVSSRKQVTK) lie on the Cytoplasmic side of the membrane. A helical membrane pass occupies residues 267–288 (MLAVVVILFALLWMPYRTLVVV). The Extracellular portion of the chain corresponds to 289-296 (NSFLSSPF). Residues 297-319 (QENWFLLFCRICIYLNSAINPVI) traverse the membrane as a helical segment. Topologically, residues 320 to 398 (YNLMSQKFRA…LASEVTFSQS (79 aa)) are cytoplasmic.

The protein belongs to the G-protein coupled receptor 1 family.

It is found in the cell membrane. Functionally, receptor for thyrotropin-releasing hormone (TRH). Upon ligand binding, this G-protein-coupled receptor triggers activation of the phosphatidylinositol (IP3)-calcium-protein kinase C (PKC) pathway. This is Thyrotropin-releasing hormone receptor (TRHR) from Ovis aries (Sheep).